We begin with the raw amino-acid sequence, 124 residues long: MVAGPACSKFLPQDPPPPSVTLVLHDLTQEEDEQDFVTLHAQYRPTFKDKTPRRPGYNPRAAPCHIQRLSARCSVFFVQVGCPCGQPLKIAVQSTPDCISQFEQLLRGPLDLLCPHCASRCYGR.

An E7 terminal domain region spans residues valine 2–threonine 51. A zinc finger lies at cysteine 82–cysteine 117. Positions isoleucine 99–arginine 107 match the Nuclear export signal motif.

The protein belongs to the papillomaviridae E7 protein family. In terms of assembly, homodimer. Homooligomer. Interacts with host RB1; this interaction induces dissociation of RB1-E2F1 complex thereby disrupting RB1 activity. Interacts with host EP300; this interaction represses EP300 transcriptional activity. Interacts with protein E2; this interaction inhibits E7 oncogenic activity. Interacts with host TMEM173/STING; this interaction impairs the ability of TMEM173/STING to sense cytosolic DNA and promote the production of type I interferon (IFN-alpha and IFN-beta). In terms of processing, highly phosphorylated.

The protein resides in the host cytoplasm. It is found in the host nucleus. In terms of biological role, plays a role in viral genome replication by driving entry of quiescent cells into the cell cycle. Stimulation of progression from G1 to S phase allows the virus to efficiently use the cellular DNA replicating machinery to achieve viral genome replication. E7 protein has both transforming and trans-activating activities. Induces the disassembly of the E2F1 transcription factor from RB1, with subsequent transcriptional activation of E2F1-regulated S-phase genes. Interferes with host histone deacetylation mediated by HDAC1 and HDAC2, leading to transcription activation. Also plays a role in the inhibition of both antiviral and antiproliferative functions of host interferon alpha. Interaction with host TMEM173/STING impairs the ability of TMEM173/STING to sense cytosolic DNA and promote the production of type I interferon (IFN-alpha and IFN-beta). The protein is Protein E7 of Bovine papillomavirus type 5.